We begin with the raw amino-acid sequence, 84 residues long: Beta-defensin 119 (84 aa).

Positions 1 to 21 (MKLLYLFLAILLAIEEPVISG) are cleaved as a signal peptide. Cystine bridges form between cysteine 35/cysteine 49 and cysteine 39/cysteine 56.

It belongs to the beta-defensin family.

Its subcellular location is the secreted. Has antibacterial activity. In Pan troglodytes (Chimpanzee), this protein is Beta-defensin 119 (DEFB119).